A 356-amino-acid polypeptide reads, in one-letter code: L-Lys-D/L-Arg epimerase (356 aa).

Residues Thr135 and 160 to 162 (KVK) each bind substrate. Residues Asp190, Glu216, and Asp241 each coordinate Mg(2+). Residues Lys266, Asp296, and 319 to 321 (DLD) each bind substrate.

This sequence belongs to the mandelate racemase/muconate lactonizing enzyme family. The cofactor is Mg(2+).

Its function is as follows. Catalyzes the epimerization of L-Lys-L-Arg to L-Lys-D-Arg. Can also catalyze the epimerization of other cationic dipeptides, such as L-Arg-L-Arg, L-Lys-L-Lys and L-Lys-L-His, but with lower efficiency (in vitro). The polypeptide is L-Lys-D/L-Arg epimerase (Methylococcus capsulatus (strain ATCC 33009 / NCIMB 11132 / Bath)).